Consider the following 42-residue polypeptide: MRYFKTYLSAAPVLSTLWLGALAALLIEINRFFPDALTFPFF.

The chain crosses the membrane as a helical span at residues 7–27 (YLSAAPVLSTLWLGALAALLI).

This sequence belongs to the PsaJ family.

It localises to the plastid membrane. Its function is as follows. May help in the organization of the PsaE and PsaF subunits. The chain is Photosystem I reaction center subunit IX from Cuscuta reflexa (Southern Asian dodder).